We begin with the raw amino-acid sequence, 302 residues long: Ribosomal RNA small subunit methyltransferase H (302 aa).

S-adenosyl-L-methionine contacts are provided by residues 32–34, D51, F78, D97, and Q104; that span reads GGH.

It belongs to the methyltransferase superfamily. RsmH family.

It is found in the cytoplasm. It catalyses the reaction cytidine(1402) in 16S rRNA + S-adenosyl-L-methionine = N(4)-methylcytidine(1402) in 16S rRNA + S-adenosyl-L-homocysteine + H(+). In terms of biological role, specifically methylates the N4 position of cytidine in position 1402 (C1402) of 16S rRNA. The protein is Ribosomal RNA small subunit methyltransferase H of Nitratiruptor sp. (strain SB155-2).